Consider the following 230-residue polypeptide: Probable caffeoyl-CoA O-methyltransferase 1 (230 aa).

S-adenosyl-L-methionine-binding positions include threonine 52, aspartate 74, 76–77, serine 82, aspartate 100, alanine 129, aspartate 151, aspartate 153, and tyrosine 160; that span reads GV. An a divalent metal cation-binding site is contributed by aspartate 151. A divalent metal cation-binding residues include aspartate 177 and asparagine 178.

It belongs to the class I-like SAM-binding methyltransferase superfamily. Cation-dependent O-methyltransferase family. CCoAMT subfamily.

The catalysed reaction is (E)-caffeoyl-CoA + S-adenosyl-L-methionine = (E)-feruloyl-CoA + S-adenosyl-L-homocysteine + H(+). This chain is Probable caffeoyl-CoA O-methyltransferase 1 (omt5), found in Dictyostelium discoideum (Social amoeba).